A 206-amino-acid polypeptide reads, in one-letter code: UPF0328 protein ECU01_0050/ECU01_1560 (206 aa).

Disordered regions lie at residues Met1–Thr153 and Gly179–Leu206. The span at His74 to Ser96 shows a compositional bias: basic and acidic residues. Polar residues-rich tracts occupy residues Pro97–Thr120 and Ser132–His148.

It belongs to the UPF0328 family.

The sequence is that of UPF0328 protein ECU01_0050/ECU01_1560 from Encephalitozoon cuniculi (strain GB-M1) (Microsporidian parasite).